The following is a 773-amino-acid chain: Endoribonuclease YSH1 (773 aa).

Positions M1–P22 are disordered. Zn(2+)-binding residues include H88, H90, D92, H93, H181, and D202. Residue H421 is the Proton donor of the active site. H443 contacts Zn(2+). Positions A624–H637 are enriched in polar residues. Disordered stretches follow at residues A624–V656 and E677–D702.

Belongs to the metallo-beta-lactamase superfamily. RNA-metabolizing metallo-beta-lactamase-like family. CPSF2/YSH1 subfamily.

It is found in the nucleus. Its function is as follows. Component of the cleavage factor I (CF I) involved in pre-mRNA 3'-end processing. In Cryptococcus neoformans var. neoformans serotype D (strain B-3501A) (Filobasidiella neoformans), this protein is Endoribonuclease YSH1 (YSH1).